The primary structure comprises 434 residues: Serine hydroxymethyltransferase (434 aa).

(6S)-5,6,7,8-tetrahydrofolate contacts are provided by residues L133 and 137-139 (GHL). An N6-(pyridoxal phosphate)lysine modification is found at K242.

The protein belongs to the SHMT family. Homodimer. It depends on pyridoxal 5'-phosphate as a cofactor.

The protein resides in the cytoplasm. It carries out the reaction (6R)-5,10-methylene-5,6,7,8-tetrahydrofolate + glycine + H2O = (6S)-5,6,7,8-tetrahydrofolate + L-serine. The protein operates within one-carbon metabolism; tetrahydrofolate interconversion. It functions in the pathway amino-acid biosynthesis; glycine biosynthesis; glycine from L-serine: step 1/1. Catalyzes the reversible interconversion of serine and glycine with tetrahydrofolate (THF) serving as the one-carbon carrier. This reaction serves as the major source of one-carbon groups required for the biosynthesis of purines, thymidylate, methionine, and other important biomolecules. Also exhibits THF-independent aldolase activity toward beta-hydroxyamino acids, producing glycine and aldehydes, via a retro-aldol mechanism. The protein is Serine hydroxymethyltransferase of Hyphomicrobium methylovorum.